Reading from the N-terminus, the 135-residue chain is Gene 52 protein (135 aa).

Disordered stretches follow at residues 1–20 (MASG…PTPE) and 110–135 (LGGR…AEKQ). The segment covering 122–135 (SKPRGRSKHRAEKQ) has biased composition (basic residues).

The protein belongs to the herpesviridae BLRF2 family.

This chain is Gene 52 protein (52), found in Equine herpesvirus 2 (strain 86/87) (EHV-2).